The chain runs to 211 residues: Imidazole glycerol phosphate synthase subunit HisH (211 aa).

The Glutamine amidotransferase type-1 domain occupies 3–211; sequence VVAVIDYEMG…VSQVREKIAA (209 aa). The active-site Nucleophile is the Cys81. Active-site residues include His186 and Glu188.

In terms of assembly, heterodimer of HisH and HisF.

The protein localises to the cytoplasm. It carries out the reaction 5-[(5-phospho-1-deoxy-D-ribulos-1-ylimino)methylamino]-1-(5-phospho-beta-D-ribosyl)imidazole-4-carboxamide + L-glutamine = D-erythro-1-(imidazol-4-yl)glycerol 3-phosphate + 5-amino-1-(5-phospho-beta-D-ribosyl)imidazole-4-carboxamide + L-glutamate + H(+). The catalysed reaction is L-glutamine + H2O = L-glutamate + NH4(+). It functions in the pathway amino-acid biosynthesis; L-histidine biosynthesis; L-histidine from 5-phospho-alpha-D-ribose 1-diphosphate: step 5/9. Its function is as follows. IGPS catalyzes the conversion of PRFAR and glutamine to IGP, AICAR and glutamate. The HisH subunit catalyzes the hydrolysis of glutamine to glutamate and ammonia as part of the synthesis of IGP and AICAR. The resulting ammonia molecule is channeled to the active site of HisF. The polypeptide is Imidazole glycerol phosphate synthase subunit HisH (Trichormus variabilis (strain ATCC 29413 / PCC 7937) (Anabaena variabilis)).